Here is a 204-residue protein sequence, read N- to C-terminus: MKSKNNKFIAMSIPFILGTALGIYVESTYYFTSIINQKSFALPDTQIKHYSIPELSRRNVSTCFTPPAGCTKFIVQQLEKAEESIYMQAYGMSDSLITTALINAQMRGVKVKILLDRSNLKQKFSKLYELQQAKIDVGIDTVPGIAHNKVIIIDKKKVITGSFNFTVAADKRNAENVILIEDQQLAESYLQNWFSRKASNSVHF.

The signal sequence occupies residues 1–22 (MKSKNNKFIAMSIPFILGTALG). Residues 142–169 (VPGIAHNKVIIIDKKKVITGSFNFTVAA) enclose the PLD phosphodiesterase domain. Residues His-147, Lys-149, and Asp-154 contribute to the active site.

This sequence belongs to the phospholipase D family. As to quaternary structure, homodimer.

The protein localises to the secreted. The enzyme catalyses a 1,2-diacyl-sn-glycero-3-phosphocholine + H2O = a 1,2-diacyl-sn-glycero-3-phosphate + choline + H(+). In terms of biological role, could be a virulence factor. This is Phospholipase D (pld) from Rickettsia typhi (strain ATCC VR-144 / Wilmington).